The primary structure comprises 534 residues: Probable glycine dehydrogenase (decarboxylating) subunit 2 (534 aa).

Lysine 273 carries the post-translational modification N6-(pyridoxal phosphate)lysine.

This sequence belongs to the GcvP family. C-terminal subunit subfamily. As to quaternary structure, the glycine cleavage system is composed of four proteins: P, T, L and H. In this organism, the P 'protein' is a heterodimer of two subunits. The cofactor is pyridoxal 5'-phosphate.

It carries out the reaction N(6)-[(R)-lipoyl]-L-lysyl-[glycine-cleavage complex H protein] + glycine + H(+) = N(6)-[(R)-S(8)-aminomethyldihydrolipoyl]-L-lysyl-[glycine-cleavage complex H protein] + CO2. In terms of biological role, the glycine cleavage system catalyzes the degradation of glycine. The P protein binds the alpha-amino group of glycine through its pyridoxal phosphate cofactor; CO(2) is released and the remaining methylamine moiety is then transferred to the lipoamide cofactor of the H protein. This is Probable glycine dehydrogenase (decarboxylating) subunit 2 from Bacillus cereus (strain ATCC 14579 / DSM 31 / CCUG 7414 / JCM 2152 / NBRC 15305 / NCIMB 9373 / NCTC 2599 / NRRL B-3711).